A 280-amino-acid chain; its full sequence is Ribosomal RNA-processing protein 7 homolog A (280 aa).

The segment covering 1–10 (MVSRRKKRKA) has biased composition (basic residues). Residues 1 to 24 (MVSRRKKRKAGGHEESIPSPPGYS) are disordered. Residues 59 to 159 (RTLFILNVPP…SGIHKWISDY (101 aa)) form the RRM domain. Phosphoserine is present on Ser99.

This sequence belongs to the RRP7 family. As to quaternary structure, part of the small subunit (SSU) processome, composed of more than 70 proteins and the RNA chaperone small nucleolar RNA (snoRNA) U3. Interacts with NOL6; required for NOL6 localization to nucleolus.

It localises to the nucleus. The protein resides in the nucleolus. It is found in the cell projection. The protein localises to the cilium. Its subcellular location is the cytoplasm. It localises to the cytoskeleton. The protein resides in the microtubule organizing center. It is found in the centrosome. Functionally, nucleolar protein that is involved in ribosomal RNA (rRNA) processing. Also plays a role in primary cilia resorption, and cell cycle progression in neurogenesis and neocortex development. Part of the small subunit (SSU) processome, first precursor of the small eukaryotic ribosomal subunit. During the assembly of the SSU processome in the nucleolus, many ribosome biogenesis factors, an RNA chaperone and ribosomal proteins associate with the nascent pre-rRNA and work in concert to generate RNA folding, modifications, rearrangements and cleavage as well as targeted degradation of pre-ribosomal RNA by the RNA exosome. The sequence is that of Ribosomal RNA-processing protein 7 homolog A (Rrp7a) from Mus musculus (Mouse).